The primary structure comprises 185 residues: Ribosome-recycling factor (185 aa).

It belongs to the RRF family.

It is found in the cytoplasm. Its function is as follows. Responsible for the release of ribosomes from messenger RNA at the termination of protein biosynthesis. May increase the efficiency of translation by recycling ribosomes from one round of translation to another. This is Ribosome-recycling factor from Buchnera aphidicola subsp. Acyrthosiphon pisum (strain APS) (Acyrthosiphon pisum symbiotic bacterium).